Reading from the N-terminus, the 218-residue chain is N-(5'-phosphoribosyl)anthranilate isomerase (218 aa).

The protein belongs to the TrpF family.

It catalyses the reaction N-(5-phospho-beta-D-ribosyl)anthranilate = 1-(2-carboxyphenylamino)-1-deoxy-D-ribulose 5-phosphate. The protein operates within amino-acid biosynthesis; L-tryptophan biosynthesis; L-tryptophan from chorismate: step 3/5. This is N-(5'-phosphoribosyl)anthranilate isomerase from Stenotrophomonas maltophilia (strain K279a).